A 361-amino-acid chain; its full sequence is MLYWLIDLSSSIPAFNVFRYITFRTGGAVVTGALFVFLCGPWIINNLRLRQGKGQPIRSDGPQSHLVTKKGTPTMGGLMILSGLTVGTVLWANPVNPYVWIVLAVTLGFGFVGFYDDYMKVTKQTHAGISGRTRLLIEFAIAGAACFALVWLGRSSLSSSLVIPFFKEVVLNLGWYFVIFGAFVIVGAGNAVNLTDGLDGLAIVPVMIAAASFGLIAYLAGNAVFADYLQINYVAGTGELAVLCGALLGAGLGFLWFNAPPASIFMGDTGSLALGGMLGSIAVAVKHEIVLAVIGGLFVLEAVSVIVQVASFKLTGKRVFRMAPIHHHFEQKGWTEPQIVIRFWIIAVMLALAGLATLKLR.

Helical transmembrane passes span 25 to 45, 72 to 92, 95 to 115, 133 to 153, 169 to 189, 200 to 220, 240 to 260, 264 to 284, 289 to 309, and 338 to 358; these read TGGAVVTGALFVFLCGPWIIN, TPTMGGLMILSGLTVGTVLWA, VNPYVWIVLAVTLGFGFVGFY, TRLLIEFAIAGAACFALVWLG, VVLNLGWYFVIFGAFVIVGAG, GLAIVPVMIAAASFGLIAYLA, LAVLCGALLGAGLGFLWFNAP, IFMGDTGSLALGGMLGSIAVA, IVLAVIGGLFVLEAVSVIVQV, and QIVIRFWIIAVMLALAGLATL.

The protein belongs to the glycosyltransferase 4 family. MraY subfamily. Requires Mg(2+) as cofactor.

The protein resides in the cell inner membrane. It catalyses the reaction UDP-N-acetyl-alpha-D-muramoyl-L-alanyl-gamma-D-glutamyl-meso-2,6-diaminopimeloyl-D-alanyl-D-alanine + di-trans,octa-cis-undecaprenyl phosphate = di-trans,octa-cis-undecaprenyl diphospho-N-acetyl-alpha-D-muramoyl-L-alanyl-D-glutamyl-meso-2,6-diaminopimeloyl-D-alanyl-D-alanine + UMP. It functions in the pathway cell wall biogenesis; peptidoglycan biosynthesis. Its function is as follows. Catalyzes the initial step of the lipid cycle reactions in the biosynthesis of the cell wall peptidoglycan: transfers peptidoglycan precursor phospho-MurNAc-pentapeptide from UDP-MurNAc-pentapeptide onto the lipid carrier undecaprenyl phosphate, yielding undecaprenyl-pyrophosphoryl-MurNAc-pentapeptide, known as lipid I. This Rhodopseudomonas palustris (strain BisB5) protein is Phospho-N-acetylmuramoyl-pentapeptide-transferase.